The chain runs to 1307 residues: Cellulose synthase 2 operon protein C (1307 aa).

Residues 1-55 form the signal peptide; the sequence is MTRPRGPAPRDGAAWRRDPARRVLLRDAVRGREGGLRLACAVMAGLIVSGGVACA. TPR repeat units follow at residues 97-130, 270-303, 339-372, 374-406, 458-491, 493-525, 528-561, 754-787, and 788-821; these read LELL…EPDN, LDGL…EPIT, AAND…DPHD, DALG…GPDA, LTVL…APRD, GALF…APAM, RLEA…DPDD, IGLA…HPDS, and VEAH…KPAN.

Belongs to the AcsC/BcsC family.

The protein resides in the cell outer membrane. It participates in glycan metabolism; bacterial cellulose biosynthesis. Required for maximal bacterial cellulose synthesis. This is Cellulose synthase 2 operon protein C (bcsCII) from Komagataeibacter xylinus (Gluconacetobacter xylinus).